Consider the following 136-residue polypeptide: Translation initiation factor 5A (136 aa).

K37 carries the hypusine modification.

The protein belongs to the eIF-5A family.

The protein localises to the cytoplasm. Its function is as follows. Functions by promoting the formation of the first peptide bond. This is Translation initiation factor 5A (eIF5A) from Thermococcus gammatolerans (strain DSM 15229 / JCM 11827 / EJ3).